The following is a 293-amino-acid chain: Inhibitory synaptic factor 1 (293 aa).

Residues 1 to 26 (MNIRGAPDLGQPSDDPSSGGERERIR) form a disordered region. Residues 30 to 63 (KMVIGQLEGILRELKEVAKELREVVSQIDKLTSD) adopt a coiled-coil conformation. Disordered stretches follow at residues 120–186 (TPSD…RERV) and 200–293 (DDEE…RGKN). The segment covering 171-180 (VKSQLPQRTP) has biased composition (polar residues). A compositionally biased stretch (acidic residues) spans 200-215 (DDEEGDGEQEVEEEEV). 2 stretches are compositionally biased toward polar residues: residues 243–256 (SPLTSRHSGSTLAP) and 264–286 (RNSSTQTVSDKSTQTVLPYTATR).

The protein belongs to the INSYN1 family. As to quaternary structure, interacts with GPHN.

Its subcellular location is the postsynaptic density. Its function is as follows. Component of the protein machinery at the inhibitory synapses, probably acting as a scaffold. Inhibitory synapses dampen neuronal activity through postsynaptic hyperpolarization. This synaptic inhibition is fundamental for the functioning of the central nervous system, shaping and orchestrating the flow of information through neuronal networks to generate a precise neural code. The chain is Inhibitory synaptic factor 1 from Homo sapiens (Human).